Consider the following 325-residue polypeptide: Serpentine receptor class gamma-16 (325 aa).

Helical transmembrane passes span 25-45, 65-85, 87-107, 144-164, 187-207, 232-252, and 264-284; these read FCLY…ILLI, VVSL…MFIP, LCPL…MYYW, LAVT…WNLL, WASL…FTII, FVSL…LIFV, and LLFQ…IIML.

Belongs to the nematode receptor-like protein srg family.

Its subcellular location is the membrane. This chain is Serpentine receptor class gamma-16 (srg-16), found in Caenorhabditis elegans.